A 51-amino-acid polypeptide reads, in one-letter code: Large ribosomal subunit protein bL33 (51 aa).

The protein belongs to the bacterial ribosomal protein bL33 family.

The polypeptide is Large ribosomal subunit protein bL33 (Pseudoalteromonas translucida (strain TAC 125)).